The primary structure comprises 464 residues: ATP-dependent protease ATPase subunit HslU (464 aa).

ATP-binding positions include Val18, 60–65, Asp277, Glu342, and Arg414; that span reads GVGKTE.

Belongs to the ClpX chaperone family. HslU subfamily. In terms of assembly, a double ring-shaped homohexamer of HslV is capped on each side by a ring-shaped HslU homohexamer. The assembly of the HslU/HslV complex is dependent on binding of ATP.

It localises to the cytoplasm. Its function is as follows. ATPase subunit of a proteasome-like degradation complex; this subunit has chaperone activity. The binding of ATP and its subsequent hydrolysis by HslU are essential for unfolding of protein substrates subsequently hydrolyzed by HslV. HslU recognizes the N-terminal part of its protein substrates and unfolds these before they are guided to HslV for hydrolysis. The chain is ATP-dependent protease ATPase subunit HslU from Lactobacillus delbrueckii subsp. bulgaricus (strain ATCC BAA-365 / Lb-18).